A 226-amino-acid chain; its full sequence is Putative N-acetylmannosamine-6-phosphate 2-epimerase 1 (226 aa).

Belongs to the NanE family.

It catalyses the reaction an N-acyl-D-glucosamine 6-phosphate = an N-acyl-D-mannosamine 6-phosphate. It participates in amino-sugar metabolism; N-acetylneuraminate degradation; D-fructose 6-phosphate from N-acetylneuraminate: step 3/5. Converts N-acetylmannosamine-6-phosphate (ManNAc-6-P) to N-acetylglucosamine-6-phosphate (GlcNAc-6-P). The sequence is that of Putative N-acetylmannosamine-6-phosphate 2-epimerase 1 (nanE1) from Salmonella typhimurium (strain LT2 / SGSC1412 / ATCC 700720).